The chain runs to 1179 residues: Integrin alpha-1 (1179 aa).

A signal peptide spans 1–28; the sequence is MAPRPRARPGVAVACCWLLTVVLRCCVS. Topologically, residues 29–1141 are extracellular; sequence FNVDVKNSMT…SKDGLPGRVP (1113 aa). Residues 30-91 form an FG-GAP 1 repeat; that stretch reads NVDVKNSMTF…CPVGRGESLP (62 aa). Asparagine 74 carries N-linked (GlcNAc...) asparagine glycosylation. An intrachain disulfide couples cysteine 82 to cysteine 92. N-linked (GlcNAc...) asparagine glycans are attached at residues asparagine 100, asparagine 105, asparagine 112, asparagine 217, asparagine 317, asparagine 341, asparagine 402, asparagine 418, and asparagine 460. The stretch at 101–160 is one FG-GAP 2 repeat; that stretch reads TSIPNVTEVKENMTFGSTLVTNPNGGFLACGPLYAYRCGHLHYTTGICSDVSPTFQVVNS. The VWFA domain maps to 161-360; that stretch reads IAPVQECSTQ…IVKTLGERIF (200 aa). An FG-GAP 3 repeat occupies 365 to 417; the sequence is TADQSAASFEMEMSQTGFSAHYSQDWVMLGAVGAYDWNGTVVMQKASQIIIPR. FG-GAP repeat units lie at residues 422 to 475, 476 to 538, 557 to 615, and 619 to 679; these read NVES…DGNI, KILQ…RFEY, SCTT…TIRK, and QRIP…FEPN. Positions 498, 500, 502, and 506 each coordinate Ca(2+). The N-linked (GlcNAc...) asparagine glycan is linked to asparagine 532. 8 residues coordinate Ca(2+): aspartate 580, asparagine 582, aspartate 584, aspartate 588, aspartate 642, asparagine 644, aspartate 646, and aspartate 650. Cysteines 688 and 697 form a disulfide. N-linked (GlcNAc...) asparagine glycans are attached at residues asparagine 699, asparagine 748, and asparagine 780. Cysteine 703 and cysteine 756 are joined by a disulfide. The cysteines at positions 808 and 814 are disulfide-linked. Asparagine 840, asparagine 883, asparagine 908, asparagine 915, asparagine 939, asparagine 966, asparagine 974, and asparagine 1008 each carry an N-linked (GlcNAc...) asparagine glycan. A disulfide bridge connects residues cysteine 878 and cysteine 886. Cystine bridges form between cysteine 1030/cysteine 1062 and cysteine 1065/cysteine 1072. Residues asparagine 1073, asparagine 1083, asparagine 1102, and asparagine 1113 are each glycosylated (N-linked (GlcNAc...) asparagine). The chain crosses the membrane as a helical span at residues 1142-1164; the sequence is LWVILLSAFAGLLLLMLLILALW. The Cytoplasmic segment spans residues 1165 to 1179; that stretch reads KIGFFKRPLKKKMEK. Positions 1167–1171 match the GFFKR motif motif; the sequence is GFFKR.

Belongs to the integrin alpha chain family. As to quaternary structure, heterodimer of an alpha and a beta subunit. Alpha-1 associates with beta-1. Interacts with RAB21. Interacts (via cytoplasmic domain) with PTPN2; activates PTPN2 phosphatase activity towards EGFR and negatively regulates EGF signaling.

The protein localises to the membrane. Integrin alpha-1/beta-1 is a receptor for laminin and collagen. It recognizes the proline-hydroxylated sequence G-F-P-G-E-R in collagen. Involved in anchorage-dependent, negative regulation of EGF-stimulated cell growth. The chain is Integrin alpha-1 (ITGA1) from Homo sapiens (Human).